A 728-amino-acid chain; its full sequence is U-box domain-containing protein 4 (728 aa).

A U-box domain is found at 296 to 370; that stretch reads SVPKEFSCPI…SQWCGVYGLQ (75 aa). ARM repeat units lie at residues 441–483 and 526–568; these read GAIP…EQEG and GAVE…ESCA.

It catalyses the reaction S-ubiquitinyl-[E2 ubiquitin-conjugating enzyme]-L-cysteine + [acceptor protein]-L-lysine = [E2 ubiquitin-conjugating enzyme]-L-cysteine + N(6)-ubiquitinyl-[acceptor protein]-L-lysine.. It participates in protein modification; protein ubiquitination. In terms of biological role, possesses E3 ubiquitin-protein ligase in vitro. This Oryza sativa subsp. japonica (Rice) protein is U-box domain-containing protein 4 (PUB4).